Reading from the N-terminus, the 201-residue chain is Recombination protein RecR (201 aa).

Residues 57-72 form a C4-type zinc finger; the sequence is CRSCRTFTEEDECNIC. The 96-residue stretch at 81 to 176 folds into the Toprim domain; it reads GQLCVVEMPE…KVTRIAHGIP (96 aa).

This sequence belongs to the RecR family.

Functionally, may play a role in DNA repair. It seems to be involved in an RecBC-independent recombinational process of DNA repair. It may act with RecF and RecO. The protein is Recombination protein RecR of Actinobacillus pleuropneumoniae serotype 5b (strain L20).